Here is a 570-residue protein sequence, read N- to C-terminus: MSVLYSSSSKQFSSSRSGGGGGGGSVRVSSTRGSLGGGYSSGGFSGGSFSRGSSGGGCFGGSSGGYGGFGGGGSFGGGYGGSSFGGGYGGSSFGGGYGGSSFGGAGFGGGGSFGGGSFGGGSYGGGFGGGGFGGDGGSLLSGNGRVTMQNLNDRLASYMDKVRALEESNYELEGKIKEWYEKHGNSSQREPRDYSKYYKTIEDLKGQILTLTTDNANVLLQIDNARLAADDFRLKYENEVTLRQSVEADINGLRRVLDELTLSKSDLEMQIESLNEELAYLKKNHEEEMRDLQNVSTGDVNVEMNAAPGVDLTQLLNNMRNQYEQLAEKNRKDAEEWFNQKSKELTTEIDSNIEQMSSHKSEITELRRTVQGLEIELQSQLALKQSLEASLAETEGRYCVQLSQIQSQISALEEQLQQIRAETECQNAEYQQLLDIKTRLENEIQTYRSLLEGEGSSSGGGGGRRGGSGGGSYGGSSGGGSYGGSSGGGGSYGGSSGGGGSYGGGSSGGGSHGGSSGGGYGGGSSSGGAGGHGGSSGGGYGGGSSSGGQGGSGGFKSSGGGDQSSKGPRY.

Over residues 1-16 the composition is skewed to low complexity; it reads MSVLYSSSSKQFSSSR. Residues 1-29 form a disordered region; sequence MSVLYSSSSKQFSSSRSGGGGGGGSVRVS. Residues 1 to 143 form a head region; it reads MSVLYSSSSK…GDGGSLLSGN (143 aa). 2 positions are modified to phosphoserine: Ser15 and Ser17. Arg32 is modified (asymmetric dimethylarginine; alternate). Arg32 carries the post-translational modification Omega-N-methylarginine; alternate. A phosphoserine mark is found at Ser34, Ser45, Ser48, and Ser168. Positions 144–179 are coil 1A; it reads GRVTMQNLNDRLASYMDKVRALEESNYELEGKIKEW. The IF rod domain maps to 144–458; sequence GRVTMQNLND…SLLEGEGSSS (315 aa). The segment at 180–200 is linker 1; that stretch reads YEKHGNSSQREPRDYSKYYKT. Residues 201 to 292 form a coil 1B region; it reads IEDLKGQILT…KNHEEEMRDL (92 aa). Residues 293-315 are linker 12; the sequence is QNVSTGDVNVEMNAAPGVDLTQL. The coil 2 stretch occupies residues 316-454; sequence LNNMRNQYEQ…QTYRSLLEGE (139 aa). The segment at 451 to 570 is disordered; the sequence is LEGEGSSSGG…GDQSSKGPRY (120 aa). Positions 455-570 are tail; the sequence is GSSSGGGGGR…GDQSSKGPRY (116 aa). The segment covering 456–562 has biased composition (gly residues); the sequence is SSSGGGGGRR…GGFKSSGGGD (107 aa).

Belongs to the intermediate filament family. In terms of assembly, (Microbial infection) Interacts (via C-terminal tail domain) with the S.aureus clumping factor, clfB; this interaction probably mediates S.aureus attachment to the highly keratinized squamous epithelial cells from the nasal cavity. Heterotetramer of two type I and two type II keratins. Heterodimer with KRT1. Two heterodimers of KRT1 and KRT10 form a heterotetramer. The KRT10 subunit in the heterotetramer is probably disulfide-linked. Interacts with PLEC isoform 1C, when in a heterodimer with KRT1. As to quaternary structure, (Microbial infection) Interacts (via the C-terminal tail domain) with S.pneumoniae serine-rich repeat protein PsrP; this interaction probably mediates S.pneumoniae adherence to lung tissue and subsequent pathogenesis. In terms of tissue distribution, expressed in the suprabasal layers of the epidermis throughout the entire sole (at protein level). Expressed in the infundibular regions of the ear, the interscale regions of the tail, and the interfollicular epidermis of the back. Expressed in lung tissue from young mice (at protein level).

The protein resides in the secreted. The protein localises to the extracellular space. It is found in the cell surface. It localises to the cytoplasm. Functionally, plays a role in the establishment of the epidermal barrier on plantar skin. Involved in the maintenance of cell layer development and keratin filament bundles in suprabasal cells of the epithelium. Its function is as follows. (Microbial infection) Acts as a mediator of S.aureus adherence to desquamated nasal epithelial cells via clfB, and hence may play a role in nasal colonization. In terms of biological role, (Microbial infection) Binds S.pneumoniae PsrP, mediating adherence of the bacteria to lung cell lines. This chain is Keratin, type I cytoskeletal 10 (Krt10), found in Mus musculus (Mouse).